The chain runs to 108 residues: uncharacterized protein (108 aa).

The chain crosses the membrane as a helical span at residues 15-37 (SYYFYIFWNFFLPMFIVYRGFGL).

The protein resides in the membrane. This is an uncharacterized protein from Archaeoglobus fulgidus (strain ATCC 49558 / DSM 4304 / JCM 9628 / NBRC 100126 / VC-16).